Here is a 431-residue protein sequence, read N- to C-terminus: MDVQKELEKVIELTRSQNRWRRTETINLIASENVMSPLAEALYMSDFMSRYAEGKPFKRFYQGTKYVDEVETLAMDYMNQVTGSKFCDLRPTSGTLANAAVFRVLANPGDKALIAPVQAGAHVSHTKFGTLGALGIEHIEMPYDEENMNVDVDRAVKMIEQIKPKFVVLGGSLYLFPHPTKDLAPHVHSVGAKLVYDAAHVYGLMTGKVWSNPLDEGADFLNVSTHKTFPGPQGGAIFSNEEEEFKKVSRTIFPWFVSNHHLHRLPSTAVTALEMKVYGEDYAKQITRNSKALAEALASFGFKVIGEHLGYTKSHQVAVDVKNLGGGAYVAKTLESANIIVNKNLLPHDPPEAVNDPSGIRIGVQEMTRFGMKEGEMEEIAELMKQILVDKRDINEMRRKVTEMRSRFLEVKYALTYDLSKYNSKLIPMIL.

Residue 121-123 (AHV) participates in (6S)-5,6,7,8-tetrahydrofolate binding. Position 227 is an N6-(pyridoxal phosphate)lysine (Lys-227).

This sequence belongs to the SHMT family. In terms of assembly, homodimer. Pyridoxal 5'-phosphate is required as a cofactor.

The protein resides in the cytoplasm. It functions in the pathway amino-acid biosynthesis; glycine biosynthesis; glycine from L-serine: step 1/1. Catalyzes the reversible interconversion of serine and glycine with a modified folate serving as the one-carbon carrier. Also exhibits a pteridine-independent aldolase activity toward beta-hydroxyamino acids, producing glycine and aldehydes, via a retro-aldol mechanism. This is Serine hydroxymethyltransferase from Metallosphaera sedula (strain ATCC 51363 / DSM 5348 / JCM 9185 / NBRC 15509 / TH2).